Here is a 149-residue protein sequence, read N- to C-terminus: 3-dehydroquinate dehydratase (149 aa).

Residue Tyr23 is the Proton acceptor of the active site. Asn75, His81, and Asp88 together coordinate substrate. The active-site Proton donor is the His101. Substrate contacts are provided by residues 102–103 (LS) and Arg112.

It belongs to the type-II 3-dehydroquinase family. In terms of assembly, homododecamer.

It catalyses the reaction 3-dehydroquinate = 3-dehydroshikimate + H2O. It participates in metabolic intermediate biosynthesis; chorismate biosynthesis; chorismate from D-erythrose 4-phosphate and phosphoenolpyruvate: step 3/7. Catalyzes a trans-dehydration via an enolate intermediate. This Stenotrophomonas maltophilia (strain R551-3) protein is 3-dehydroquinate dehydratase.